Consider the following 258-residue polypeptide: UPF0758 protein Bcep1808_2579 (258 aa).

An MPN domain is found at P136–L258. Zn(2+) contacts are provided by H207, H209, and D220. The short motif at H207–D220 is the JAMM motif element.

This sequence belongs to the UPF0758 family.

The chain is UPF0758 protein Bcep1808_2579 from Burkholderia vietnamiensis (strain G4 / LMG 22486) (Burkholderia cepacia (strain R1808)).